The following is a 421-amino-acid chain: MLYLEDYLEMIEQLPMDLRDRFTEMREMDLQVQNAMDQLEQRVSEFFMNAKKNKPEWREEQMASIKKDYYKALEDADEKVQLANQIYDLVDRHLRKLDQELAKFKMELEADNAGITEILERRSLELDAPSQPVNNHHAHSHTPVEKRKYNPTSHHAAADHIPEKKFKSEALLSTLTSDASKENTLGCRNNNSTASCNNAYNVNSSQPLASYNIGSLSSGAGAGAITMAAAQAVQATAQMKEGRRTSSLKASYEAFKNNDFQLGKEFSIPRETAGYSSSSALMTTLTQNASSSATDSRSGRKSKNNTKSSSQQSSSSSSSSSSSSLSLCSSSSTVVQEVSQQATVVPESDSNSQVDWTYDPNEPRYCICNQVSYGEMVGCDNQDCPIEWFHYGCVGLTEAPKGKWFCPQCTAAMKRRGSRHK.

The interval 129–163 (PSQPVNNHHAHSHTPVEKRKYNPTSHHAAADHIPE) is disordered. Glycyl lysine isopeptide (Lys-Gly) (interchain with G-Cter in SUMO2) cross-links involve residues lysine 148, lysine 165, and lysine 167. Lysine 181 carries the post-translational modification N6-acetyllysine. A Glycyl lysine isopeptide (Lys-Gly) (interchain with G-Cter in SUMO2) cross-link involves residue lysine 256. Residue lysine 264 is modified to N6-acetyllysine. The span at 286–296 (TQNASSSATDS) shows a compositional bias: polar residues. Residues 286-323 (TQNASSSATDSRSGRKSKNNTKSSSQQSSSSSSSSSSS) are disordered. Low complexity predominate over residues 308–323 (SSSQQSSSSSSSSSSS). Residues 363–412 (PRYCICNQVSYGEMVGCDNQDCPIEWFHYGCVGLTEAPKGKWFCPQCTAA) form a PHD-type zinc finger. Zn(2+) is bound by residues cysteine 366, cysteine 368, cysteine 379, cysteine 384, histidine 390, cysteine 393, cysteine 406, and cysteine 409.

The protein belongs to the ING family. In terms of assembly, interacts with H3K4me3 and to a lesser extent with H3K4me2. Component of the NuA4 histone acetyltransferase complex which contains the catalytic subunit KAT5/TIP60 and the subunits EP400, TRRAP/PAF400, BRD8/SMAP, EPC1, DMAP1/DNMAP1, RUVBL1/TIP49, RUVBL2, ING3, actin, ACTL6A/BAF53A, MORF4L1/MRG15, MORF4L2/MRGX, MRGBP, YEATS4/GAS41, VPS72/YL1 and MEAF6. The NuA4 complex interacts with MYC. HTATTIP/TIP60, EPC1, and ING3 together constitute a minimal HAT complex termed Piccolo NuA4. Component of a SWR1-like complex.

Its subcellular location is the nucleus. In terms of biological role, component of the NuA4 histone acetyltransferase (HAT) complex which is involved in transcriptional activation of select genes principally by acetylation of nucleosomal histones H4 and H2A. This modification may both alter nucleosome - DNA interactions and promote interaction of the modified histones with other proteins which positively regulate transcription. This complex may be required for the activation of transcriptional programs associated with oncogene and proto-oncogene mediated growth induction, tumor suppressor mediated growth arrest and replicative senescence, apoptosis, and DNA repair. NuA4 may also play a direct role in DNA repair when directly recruited to sites of DNA damage. Component of a SWR1-like complex that specifically mediates the removal of histone H2A.Z/H2AZ1 from the nucleosome. The polypeptide is Inhibitor of growth protein 3 (Ing3) (Mus musculus (Mouse)).